Here is a 235-residue protein sequence, read N- to C-terminus: Transmembrane protein 176A (235 aa).

Serine 38 carries the phosphoserine modification. Helical transmembrane passes span 55–75 (VASW…GGFF), 86–106 (SGAA…AFIY), 113–133 (YWAL…IAAL), and 193–213 (AMLL…LWLY).

This sequence belongs to the TMEM176 family. As to quaternary structure, interacts with MCOLN2.

The protein localises to the membrane. The sequence is that of Transmembrane protein 176A (TMEM176A) from Homo sapiens (Human).